Consider the following 872-residue polypeptide: Alanine--tRNA ligase (872 aa).

Zn(2+)-binding residues include His-567, His-571, Cys-669, and His-673.

It belongs to the class-II aminoacyl-tRNA synthetase family. Requires Zn(2+) as cofactor.

Its subcellular location is the cytoplasm. It catalyses the reaction tRNA(Ala) + L-alanine + ATP = L-alanyl-tRNA(Ala) + AMP + diphosphate. In terms of biological role, catalyzes the attachment of alanine to tRNA(Ala) in a two-step reaction: alanine is first activated by ATP to form Ala-AMP and then transferred to the acceptor end of tRNA(Ala). Also edits incorrectly charged Ser-tRNA(Ala) and Gly-tRNA(Ala) via its editing domain. This is Alanine--tRNA ligase from Streptococcus pyogenes serotype M18 (strain MGAS8232).